The following is a 588-amino-acid chain: SSSSTTTIPLCTNKSLSSSFTTNNSSFLSKPSQLFLHGRRNQSFKVSCNANNNVGEHDKNLDTVDRRNVLLGLGGLYGAANLAPLASASPIPPPDLKSCGVAHVTEGVDVTYSCCPPVPDDIDSVPYYKFPPMTKLRIRPPAHAADEEYVAKYQLATSRMRELDKDSFDPLGFKQQANIHCAYCNGAYKVGGKELQVHFSWLFFPFHRWYLYFYERILGSLINDPTFALPYWNWDHPKGMRIPPMFDREGSSLYDDKRNQNHRNGTIIDLGHFGQEVDTPQLQIMTNNLTLMYRQMVTNAPCPSQFFGAAYPLGTEPSPGMGTIENIPHTPVHIWTGDSPRQKNGENMGNFYSAGLDPIFYCHHANVDRMWDEWKLIGGKRRDLSNKDWLNSEFFFYDENRNPYRVKVRDCLDSKKMGFSYAPMPTPWRNFKPIRKTTAGKVNTASIAPVTKVFPLAKLDRAISFSITRPASSRTTQEKNEQEEILTFNKVAYDDTKYVRFDVFLNVDKTVNADELDKAEFAGSYTSLPHVHGNNTNHVTSVTFKLAITELLEDNGLEDEDTIAVTLVPKVGGEGVSIESVEIKLEDC.

A chloroplast-targeting transit peptide spans 1–88 (SSSSTTTIPL…AANLAPLASA (88 aa)). 2 disulfide bridges follow: Cys99-Cys115 and Cys114-Cys181. Cu cation contacts are provided by His180, His198, His207, His329, His333, and His364. Positions 184-198 (CNGAYKVGGKELQVH) form a cross-link, 2'-(S-cysteinyl)-histidine (Cys-His).

Belongs to the tyrosinase family. It depends on Cu(2+) as a cofactor.

Its subcellular location is the plastid. It localises to the chloroplast thylakoid lumen. It catalyses the reaction 2 catechol + O2 = 2 1,2-benzoquinone + 2 H2O. Catalyzes the oxidation of mono- and o-diphenols to o-diquinones. This chain is Catechol oxidase B, chloroplastic, found in Solanum tuberosum (Potato).